The primary structure comprises 148 residues: 3-dehydroquinate dehydratase (148 aa).

Tyrosine 23 functions as the Proton acceptor in the catalytic mechanism. Substrate contacts are provided by asparagine 75, histidine 81, and aspartate 88. Histidine 101 serves as the catalytic Proton donor. Residues 102–103 and arginine 112 contribute to the substrate site; that span reads IS.

The protein belongs to the type-II 3-dehydroquinase family. As to quaternary structure, homododecamer.

The enzyme catalyses 3-dehydroquinate = 3-dehydroshikimate + H2O. It participates in metabolic intermediate biosynthesis; chorismate biosynthesis; chorismate from D-erythrose 4-phosphate and phosphoenolpyruvate: step 3/7. Catalyzes a trans-dehydration via an enolate intermediate. The polypeptide is 3-dehydroquinate dehydratase (Methylococcus capsulatus (strain ATCC 33009 / NCIMB 11132 / Bath)).